We begin with the raw amino-acid sequence, 580 residues long: Protein O-linked-mannose beta-1,4-N-acetylglucosaminyltransferase 2 (580 aa).

At 1–4 the chain is on the cytoplasmic side; that stretch reads MHLS. Residues 5–25 form a helical; Signal-anchor for type II membrane protein membrane-spanning segment; sequence AVFNALLVSVLAAVLWKHVRL. At 26–580 the chain is on the lumenal side; that stretch reads REHAATLEEE…PFADVLVCST (555 aa). Asparagine 99 and asparagine 276 each carry an N-linked (GlcNAc...) asparagine glycan. The Fibronectin type-III domain maps to 488–580; that stretch reads ARCQASVQGA…PFADVLVCST (93 aa).

This sequence belongs to the glycosyltransferase 61 family. Mainly expressed in the central nervous system.

It localises to the endoplasmic reticulum membrane. It catalyses the reaction 3-O-(alpha-D-mannosyl)-L-threonyl-[protein] + UDP-N-acetyl-alpha-D-glucosamine = 3-O-(N-acetyl-beta-D-glucosaminyl-(1-&gt;4)-alpha-D-mannosyl)-L-threonyl-[protein] + UDP + H(+). Its pathway is protein modification; protein glycosylation. Its function is as follows. O-linked mannose beta-1,4-N-acetylglucosaminyltransferase that transfers UDP-N-acetyl-D-glucosamine to the 4-position of the mannose to generate N-acetyl-D-glucosamine-beta-1,4-O-D-mannosylprotein. Involved in the biosynthesis of the phosphorylated O-mannosyl trisaccharide (N-acetylgalactosamine-beta-3-N-acetylglucosamine-beta-4-(phosphate-6-)mannose), a carbohydrate structure present in alpha-dystroglycan (DAG1), which is required for binding laminin G-like domain-containing extracellular proteins with high affinity. The protein is Protein O-linked-mannose beta-1,4-N-acetylglucosaminyltransferase 2 (Pomgnt2) of Mus musculus (Mouse).